Reading from the N-terminus, the 337-residue chain is GTP 3',8-cyclase (337 aa).

Residues 18-242 (NFGRRFHYLR…DKADILDGPA (225 aa)) form the Radical SAM core domain. GTP is bound at residue arginine 27. Cysteine 34 and cysteine 38 together coordinate [4Fe-4S] cluster. Tyrosine 40 serves as a coordination point for S-adenosyl-L-methionine. Position 41 (cysteine 41) interacts with [4Fe-4S] cluster. Arginine 76 provides a ligand contact to GTP. An S-adenosyl-L-methionine-binding site is contributed by glycine 80. A GTP-binding site is contributed by threonine 107. S-adenosyl-L-methionine is bound at residue serine 131. Residue lysine 168 participates in GTP binding. Methionine 202 provides a ligand contact to S-adenosyl-L-methionine. 2 residues coordinate [4Fe-4S] cluster: cysteine 265 and cysteine 268. 270-272 (RLR) contributes to the GTP binding site. A [4Fe-4S] cluster-binding site is contributed by cysteine 282.

This sequence belongs to the radical SAM superfamily. MoaA family. Monomer and homodimer. Requires [4Fe-4S] cluster as cofactor.

The catalysed reaction is GTP + AH2 + S-adenosyl-L-methionine = (8S)-3',8-cyclo-7,8-dihydroguanosine 5'-triphosphate + 5'-deoxyadenosine + L-methionine + A + H(+). Its pathway is cofactor biosynthesis; molybdopterin biosynthesis. Its function is as follows. Catalyzes the cyclization of GTP to (8S)-3',8-cyclo-7,8-dihydroguanosine 5'-triphosphate. This is GTP 3',8-cyclase from Shewanella denitrificans (strain OS217 / ATCC BAA-1090 / DSM 15013).